The sequence spans 505 residues: L-carnitine/gamma-butyrobetaine antiporter (505 aa).

The next 12 membrane-spanning stretches (helical) occupy residues 10-30 (IEPK…WLTV), 51-71 (WGWA…WLVF), 92-112 (IFMM…SIEI), 143-163 (GPLP…FFFV), 195-215 (FYLV…TPLV), 231-251 (LDAI…ACGL), 263-283 (SYLS…SFIM), 316-336 (WTVF…IFLA), 347-367 (LCFG…TVLG), 403-423 (LSTA…VTLI), 446-466 (LLVR…LLAL), and 475-495 (AIIA…LSFI).

It belongs to the BCCT transporter (TC 2.A.15) family. CaiT subfamily. In terms of assembly, homotrimer.

It is found in the cell inner membrane. It catalyses the reaction 4-(trimethylamino)butanoate(in) + (R)-carnitine(out) = 4-(trimethylamino)butanoate(out) + (R)-carnitine(in). It participates in amine and polyamine metabolism; carnitine metabolism. Catalyzes the exchange of L-carnitine for gamma-butyrobetaine. The sequence is that of L-carnitine/gamma-butyrobetaine antiporter from Salmonella gallinarum (strain 287/91 / NCTC 13346).